Reading from the N-terminus, the 382-residue chain is MRSEPTNAAGNTTLGVTSVLQSTSVPSSETCHVSYEESRVVLVVVYSAVCLLGLPANCLTAWLTLLQVLQRNVLAVYLFCLSLCELLYISTVPLWIIYIQNQHKWNLGPQACKVTAYIFFCNIYISILLLCCISCDRYMAVVYALESRGHRHQRTAVTISACVILLVGLVNYPVFDMKVEKSFCFEPLRMNSKIAGYHYLRFTFGFAIPLGILAFTNHQIFRSIKLSDSLSAAQKNKVKRSAIAVVTIFLVCFAPYHVVLLVKAASFSFYQGDMDAVCAFESRLYTVSMVFLCLSTVNSVADPIIYVLGTDHSRQEVSRIHTGWKKWSTKTYVTCSKDSEETHLPTELSNTYTFPNPAHPPGSQPAKLGLLCSPERLPEELC.

Residues 1–42 (MRSEPTNAAGNTTLGVTSVLQSTSVPSSETCHVSYEESRVVL) are Extracellular-facing. N-linked (GlcNAc...) asparagine glycosylation occurs at Asn11. A helical membrane pass occupies residues 43 to 65 (VVVYSAVCLLGLPANCLTAWLTL). At 66 to 76 (LQVLQRNVLAV) the chain is on the cytoplasmic side. The helical transmembrane segment at 77-99 (YLFCLSLCELLYISTVPLWIIYI) threads the bilayer. The Extracellular segment spans residues 100-113 (QNQHKWNLGPQACK). A disulfide bridge links Cys112 with Cys184. A helical transmembrane segment spans residues 114 to 135 (VTAYIFFCNIYISILLLCCISC). Residues 136-155 (DRYMAVVYALESRGHRHQRT) are Cytoplasmic-facing. The chain crosses the membrane as a helical span at residues 156 to 175 (AVTISACVILLVGLVNYPVF). At 176-198 (DMKVEKSFCFEPLRMNSKIAGYH) the chain is on the extracellular side. A helical transmembrane segment spans residues 199 to 221 (YLRFTFGFAIPLGILAFTNHQIF). Residues 222-241 (RSIKLSDSLSAAQKNKVKRS) lie on the Cytoplasmic side of the membrane. Residues 242-261 (AIAVVTIFLVCFAPYHVVLL) form a helical membrane-spanning segment. At 262–286 (VKAASFSFYQGDMDAVCAFESRLYT) the chain is on the extracellular side. Residues 287 to 309 (VSMVFLCLSTVNSVADPIIYVLG) form a helical membrane-spanning segment. The Cytoplasmic portion of the chain corresponds to 310-382 (TDHSRQEVSR…SPERLPEELC (73 aa)).

The protein belongs to the G-protein coupled receptor 1 family. As to expression, highly expressed in hematopoietic tissues rich in lymphocytes like spleen and thymus. Weakly expressed in heart and lung. Highly expressed in infiltrating macrophages within atherosclerotic lesions.

Its subcellular location is the cell membrane. Functionally, may be a receptor for oxidized free fatty acids derived from linoleic and arachidonic acids such as 9-hydroxyoctadecadienoic acid (9-HODE). Activates a G alpha protein, most likely G alpha(q). May be involved in apoptosis. Functions at the G2/M checkpoint to delay mitosis. May function as a sensor that monitors the oxidative states and mediates appropriate cellular responses such as secretion of paracrine signals and attenuation of proliferation. May mediate ths accumulation of intracellular inositol phosphates at acidic pH through proton-sensing activity. The chain is Probable G-protein coupled receptor 132 (Gpr132) from Mus musculus (Mouse).